Consider the following 144-residue polypeptide: Large ribosomal subunit protein uL15 (144 aa).

The tract at residues 1-56 is disordered; sequence MELNTLAPAPGAKSSKKRVGRGIGSGLGKTGGRGHKGQKSRSGGSVKPGFEGGQMP. The segment covering 21 to 31 has biased composition (gly residues); that stretch reads RGIGSGLGKTG.

It belongs to the universal ribosomal protein uL15 family. As to quaternary structure, part of the 50S ribosomal subunit.

Functionally, binds to the 23S rRNA. The chain is Large ribosomal subunit protein uL15 from Idiomarina loihiensis (strain ATCC BAA-735 / DSM 15497 / L2-TR).